Here is a 552-residue protein sequence, read N- to C-terminus: Cytochrome c oxidase subunit 1 (552 aa).

Residues 35–55 (VIGIQYLVTAFIFYLIGGLMA) traverse the membrane as a helical segment. Position 82 (histidine 82) interacts with Fe(II)-heme a. Helical transmembrane passes span 85 to 105 (IMIF…YLVP), 120 to 140 (ALAF…FLFG), 164 to 184 (WILA…NFIV), 211 to 231 (LLAL…LFDI), 252 to 272 (LFWF…FGIM), and 284 to 304 (IFGY…GLFV). Cu cation-binding residues include histidine 258 and tyrosine 262. A cross-link (1'-histidyl-3'-tyrosine (His-Tyr)) is located at residues 258 to 262 (HPAVY). The Cu cation site is built by histidine 307 and histidine 308. Transmembrane regions (helical) follow at residues 321-341 (FFTI…FSWV), 355-375 (MLFA…GVTL), 390-410 (VVAH…YAGI), 426-446 (LGIL…LPMH), and 470-490 (ICTI…INII). Histidine 393 contacts heme a3. A Fe(II)-heme a-binding site is contributed by histidine 395.

The protein belongs to the heme-copper respiratory oxidase family. Cu(2+) serves as cofactor. Heme is required as a cofactor.

The protein localises to the cell membrane. It carries out the reaction 4 Fe(II)-[cytochrome c] + O2 + 8 H(+)(in) = 4 Fe(III)-[cytochrome c] + 2 H2O + 4 H(+)(out). It participates in energy metabolism; oxidative phosphorylation. Functionally, cytochrome c oxidase is the component of the respiratory chain that catalyzes the reduction of oxygen to water. Subunits 1-3 form the functional core of the enzyme complex. CO I is the catalytic subunit of the enzyme. Electrons originating in cytochrome c are transferred via the copper A center of subunit 2 and heme A of subunit 1 to the bimetallic center formed by heme A3 and copper B. The chain is Cytochrome c oxidase subunit 1 (ctaD) from Thermostichus vulcanus (Synechococcus vulcanus).